Here is a 152-residue protein sequence, read N- to C-terminus: Ribonuclease pancreatic (152 aa).

Positions 1–24 are cleaved as a signal peptide; sequence MALDKSVILLPLLVLVLLVLGCLG. Residues Lys31 and Arg34 each coordinate substrate. His36 acts as the Proton acceptor in catalysis. A glycan (N-linked (GlcNAc...) asparagine) is linked at Asn46. 4 cysteine pairs are disulfide-bonded: Cys50–Cys108, Cys64–Cys119, Cys82–Cys134, and Cys89–Cys96. Substrate-binding positions include 65–69, Lys90, and Arg109; that span reads KPVNT. Asn112 is a glycosylation site (N-linked (GlcNAc...) asparagine). His143 acts as the Proton donor in catalysis.

This sequence belongs to the pancreatic ribonuclease family. Monomer. Interacts with and forms tight 1:1 complexes with RNH1. Dimerization of two such complexes may occur. Interaction with RNH1 inhibits this protein.

The protein resides in the secreted. It carries out the reaction an [RNA] containing cytidine + H2O = an [RNA]-3'-cytidine-3'-phosphate + a 5'-hydroxy-ribonucleotide-3'-[RNA].. The catalysed reaction is an [RNA] containing uridine + H2O = an [RNA]-3'-uridine-3'-phosphate + a 5'-hydroxy-ribonucleotide-3'-[RNA].. Functionally, endonuclease that catalyzes the cleavage of RNA on the 3' side of pyrimidine nucleotides. Acts on single-stranded and double-stranded RNA. The polypeptide is Ribonuclease pancreatic (RNASE1) (Miopithecus talapoin (Angolan talapoin)).